The chain runs to 232 residues: E3 ubiquitin-protein ligase RNF125 (232 aa).

Residues 1–10 (MGSVLSSDSG) show a composition bias toward polar residues. Positions 1–27 (MGSVLSSDSGKSAPPSATPRALERRGD) are disordered. G2 carries N-myristoyl glycine lipidation. Residues C37 and C40 each contribute to the Zn(2+) site. The RING-type zinc-finger motif lies at 37-76 (CAVCLEVLHQPVRTRCGHVFCRSCIATSLKNNKWTCPYCR). An interaction with the C2HC RNF-type zinc finger region spans residues 43-45 (VLH). Residues C52, H54, C57, C60, C72, C75, C100, and C103 each contribute to the Zn(2+) site. The segment at 100-119 (CAECDTLVCLGEMRAHIRTC) adopts a C2HC RNF-type zinc-finger fold. The tract at residues 109–113 (LGEMR) is interaction with the RING-type zinc finger. H115 and C119 together coordinate Zn(2+). The segment at 120–128 (QKYIDKYGP) is linker region. Residues 210–224 (EEALIRRVLDRSLLE) form a required for interaction with ubiquitin and for autoubiquitination region.

As to quaternary structure, interacts with UBE2D1. Interacts with VCP/p97; leading to recruit RNF125 to RIGI and promote ubiquitination of RIGI. Autoubiquitinated, leading to its subsequent proteasomal degradation.

The protein resides in the golgi apparatus membrane. It carries out the reaction S-ubiquitinyl-[E2 ubiquitin-conjugating enzyme]-L-cysteine + [acceptor protein]-L-lysine = [E2 ubiquitin-conjugating enzyme]-L-cysteine + N(6)-ubiquitinyl-[acceptor protein]-L-lysine.. It functions in the pathway protein modification; protein ubiquitination. Its function is as follows. E3 ubiquitin-protein ligase that mediates ubiquitination and subsequent proteasomal degradation of target proteins, such as RIGI, MAVS/IPS1, IFIH1/MDA5, JAK1 and p53/TP53. Acts as a negative regulator of type I interferon production by mediating ubiquitination of RIGI at 'Lys-181', leading to RIGI degradation. Mediates ubiquitination and subsequent degradation of p53/TP53. Mediates ubiquitination and subsequent degradation of JAK1. Acts as a positive regulator of T-cell activation. In Macaca fascicularis (Crab-eating macaque), this protein is E3 ubiquitin-protein ligase RNF125 (RNF125).